A 621-amino-acid polypeptide reads, in one-letter code: Membrane protein insertase YidC (621 aa).

The next 6 helical transmembrane spans lie at 1–21 (MDKN…GFSI), 363–383 (GWGL…KVLV), 436–456 (MGGC…FFFV), 486–506 (IPLL…TNIL), 527–547 (LMMY…SSGL), and 549–569 (YYYF…RKTT).

This sequence belongs to the OXA1/ALB3/YidC family. Type 1 subfamily. As to quaternary structure, interacts with the Sec translocase complex via SecD. Specifically interacts with transmembrane segments of nascent integral membrane proteins during membrane integration.

It localises to the cell inner membrane. Its function is as follows. Required for the insertion and/or proper folding and/or complex formation of integral membrane proteins into the membrane. Involved in integration of membrane proteins that insert both dependently and independently of the Sec translocase complex, as well as at least some lipoproteins. Aids folding of multispanning membrane proteins. The polypeptide is Membrane protein insertase YidC (Phocaeicola vulgatus (strain ATCC 8482 / DSM 1447 / JCM 5826 / CCUG 4940 / NBRC 14291 / NCTC 11154) (Bacteroides vulgatus)).